The following is a 620-amino-acid chain: Mitochondrial Rho GTPase 2 (620 aa).

The Cytoplasmic segment spans residues 1–594 (MRRDVRILLL…ELHPTSFWLR (594 aa)). One can recognise a Miro 1 domain in the interval 2–168 (RRDVRILLLG…FYYAQKAVLH (167 aa)). GTP-binding residues include Gly16, Lys17, Thr18, and Ser19. Position 18 (Thr18) interacts with Mg(2+). Mg(2+) is bound at residue Asp57. Ser59 contributes to the GTP binding site. Lys96 is covalently cross-linked (Glycyl lysine isopeptide (Lys-Gly) (interchain with G-Cter in ubiquitin)). GTP is bound by residues Asn118, Lys119, Asp121, Ala149, and Lys150. Lys119 is covalently cross-linked (Glycyl lysine isopeptide (Lys-Gly) (interchain with G-Cter in ubiquitin)). Residue Lys164 forms a Glycyl lysine isopeptide (Lys-Gly) (interchain with G-Cter in ubiquitin) linkage. 2 EF-hand domains span residues 184–219 (ACAQ…CFGH) and 304–339 (RGYQ…FSGA). Asp197, Asp199, Asp201, Glu208, Asp317, Asp319, Asp321, and Glu328 together coordinate Ca(2+). Positions 415–578 (RSVLMCKVLG…FTQLATMATF (164 aa)) constitute a Miro 2 domain. 5 residues coordinate GTP: Gly427, Gly429, Lys430, Ser431, and Ala432. A Mg(2+)-binding site is contributed by Ser431. Glu473 contributes to the Mg(2+) binding site. GTP is bound by residues Lys527, Asp529, and Cys558. The chain crosses the membrane as a helical; Anchor for type IV membrane protein span at residues 595-617 (GVLVAVGTAVAAVLSFSLYRVLV). Residues 618–620 (KSR) lie on the Mitochondrial intermembrane side of the membrane.

It belongs to the mitochondrial Rho GTPase family. Homodimer. Interacts with the kinesin-binding proteins TRAK1/OIP106 and TRAK2/GRIF1, forming a link between mitochondria and the trafficking apparatus of the microtubules. Interacts with ARMCX3. Found in a complex with KIF5B, OGT, RHOT1 and TRAK1. Post-translationally, ubiquitinated by PRKN in a PINK1-dependent manner, leading to its degradation. Ubiquitously expressed.

It is found in the mitochondrion outer membrane. The catalysed reaction is GTP + H2O = GDP + phosphate + H(+). The enzyme catalyses ATP + H2O = ADP + phosphate + H(+). It catalyses the reaction UTP + H2O = UDP + phosphate + H(+). Its function is as follows. Atypical mitochondrial nucleoside-triphosphatase (NTPase) involved in mitochondrial trafficking. Probably involved in control of anterograde transport of mitochondria and their subcellular distribution. Can hydrolyze GTP, ATP and UTP. In Mus musculus (Mouse), this protein is Mitochondrial Rho GTPase 2 (Rhot2).